Consider the following 172-residue polypeptide: HTH-type transcriptional regulator IscR (172 aa).

Residues 2 to 131 enclose the HTH rrf2-type domain; that stretch reads RLTSKGRYAV…NNITLGELMR (130 aa). Residues 28 to 51 constitute a DNA-binding region (H-T-H motif); it reads LADISERQGISLSYLEQLFSRLRK. [2Fe-2S] cluster is bound by residues Cys-92, Cys-98, and Cys-104.

The cofactor is [2Fe-2S] cluster.

In terms of biological role, regulates the transcription of several operons and genes involved in the biogenesis of Fe-S clusters and Fe-S-containing proteins. The protein is HTH-type transcriptional regulator IscR of Photobacterium profundum (strain SS9).